We begin with the raw amino-acid sequence, 451 residues long: Cysteine protease ATG4 (451 aa).

Cysteine 122 acts as the Nucleophile in catalysis. Catalysis depends on residues aspartate 297 and histidine 299.

This sequence belongs to the peptidase C54 family. In terms of assembly, interacts with ATG8.

It is found in the cytoplasm. The protein resides in the nucleus. The protein localises to the preautophagosomal structure. The enzyme catalyses [protein]-C-terminal L-amino acid-glycyl-phosphatidylethanolamide + H2O = [protein]-C-terminal L-amino acid-glycine + a 1,2-diacyl-sn-glycero-3-phosphoethanolamine. Its function is as follows. Cysteine protease that plays a key role in cytoplasm to vacuole transport (Cvt) and autophagy by mediating both proteolytic activation and delipidation of ATG8. Required for selective autophagic degradation of the nucleus (nucleophagy) as well as for mitophagy which contributes to regulate mitochondrial quantity and quality by eliminating the mitochondria to a basal level to fulfill cellular energy requirements and preventing excess ROS production. The protease activity is required for proteolytic activation of ATG8: cleaves the C-terminal amino acid of ATG8 to reveal a C-terminal glycine. ATG8 ubiquitin-like activity requires the exposure of the glycine at the C-terminus for its conjugation to phosphatidylethanolamine (PE) and its insertion to membranes, which is necessary for autophagy. The ATG8-PE conjugate mediates tethering between adjacent membranes and stimulates membrane hemifusion, leading to expansion of the autophagosomal membrane during autophagy. In addition to the protease activity, also catalyzes deconjugation of PE-conjugated forms of ATG8 during macroautophagy: ATG8 delipidation is required to release the protein from membranes, which facilitates multiple events during macroautophagy, and especially for efficient autophagosome biogenesis, the assembly of ATG9-containing tubulovesicular clusters into phagophores/autophagosomes, and for the disassembly of PAS-associated ATG components. ATG8 delipidation by ATG4 also recycles ATG8-PE generated on inappropriate membranes to maintain a reservoir of unlipidated ATG8 that is required for autophagosome formation at the PAS. The polypeptide is Cysteine protease ATG4 (Kluyveromyces marxianus (strain DMKU3-1042 / BCC 29191 / NBRC 104275) (Yeast)).